A 264-amino-acid polypeptide reads, in one-letter code: Acyl-[acyl-carrier-protein]--UDP-N-acetylglucosamine O-acyltransferase (264 aa).

The protein belongs to the transferase hexapeptide repeat family. LpxA subfamily. Homotrimer.

The protein resides in the cytoplasm. The enzyme catalyses a (3R)-hydroxyacyl-[ACP] + UDP-N-acetyl-alpha-D-glucosamine = a UDP-3-O-[(3R)-3-hydroxyacyl]-N-acetyl-alpha-D-glucosamine + holo-[ACP]. It participates in glycolipid biosynthesis; lipid IV(A) biosynthesis; lipid IV(A) from (3R)-3-hydroxytetradecanoyl-[acyl-carrier-protein] and UDP-N-acetyl-alpha-D-glucosamine: step 1/6. Functionally, involved in the biosynthesis of lipid A, a phosphorylated glycolipid that anchors the lipopolysaccharide to the outer membrane of the cell. This Rickettsia africae (strain ESF-5) protein is Acyl-[acyl-carrier-protein]--UDP-N-acetylglucosamine O-acyltransferase.